Here is an 837-residue protein sequence, read N- to C-terminus: Zinc fingers and homeoboxes protein 2 (837 aa).

Residues 1–41 (MASKRKSTTPCMVRTSQVVEQDVPEEVDRAKEKGIGTPQPD) form a disordered region. Residues 27–77 (VDRAKEKGIGTPQPDVAKDCWAAELENSSKENEVIEVKSMGESQSKKLQGG) are interaction with EFNB1. Thr-37 carries the post-translational modification Phosphothreonine. Lys-64 participates in a covalent cross-link: Glycyl lysine isopeptide (Lys-Gly) (interchain with G-Cter in SUMO2). C2H2-type zinc fingers lie at residues 78 to 101 (YECKYCPYSTQNLNEFTEHVDMQH) and 110 to 133 (YVCAECNFTTKKYDSLSDHNSKFH). The span at 167-180 (TSGPGTGDSDSGIS) shows a compositional bias: low complexity. A disordered region spans residues 167 to 203 (TSGPGTGDSDSGISVSKTPIMKPGKPKADAKKVPKKP). Residues 192-203 (PKADAKKVPKKP) are compositionally biased toward basic and acidic residues. Residues 195-358 (DAKKVPKKPE…PAQLAPTKVT (164 aa)) form a required for homodimerization region. 4 consecutive DNA-binding regions (homeobox) follow at residues 263 to 324 (NTTK…WSPE), 439 to 501 (TPAS…IVHI), 530 to 591 (PQKF…EQAV), and 628 to 690 (SPSP…TVKW). Residues 263–446 (NTTKYNSALD…PLTPASDRKK (184 aa)) are required for repressor activity. Residues 263–497 (NTTKYNSALD…SDHRYRCQRG (235 aa)) are required for interaction with NFYA. Positions 317–446 (HGISWSPEEV…PLTPASDRKK (130 aa)) are required for nuclear localization. A disordered region spans residues 404-445 (GQKRPLVTPQAAPEPKRPHIAQVPEPPPKVANPPLTPASDRK). Over residues 427–439 (PEPPPKVANPPLT) the composition is skewed to pro residues. Lys-455 is covalently cross-linked (Glycyl lysine isopeptide (Lys-Gly) (interchain with G-Cter in SUMO2)). Residues 754–837 (EPAKDCLPAK…DCVPAEAGQA (84 aa)) are disordered. Ser-825 and Ser-827 each carry phosphoserine.

The protein belongs to the ZHX family. As to quaternary structure, homodimer (via homeobox domain 1). Heterodimer with ZHX1 (via homeobox domain 1). Heterodimer with ZHX3 (via homeobox domain 1). Heterodimerization with ZHX1 is not necessary for repressor activity. Interacts (via homeobox domain) with NFYA (via N-terminus). Interacts with EFNB1 intracellular domain peptide; the interaction enhances ZHX2 transcriptional repression activity.

The protein resides in the nucleus. Acts as a transcriptional repressor. Represses the promoter activity of the CDC25C gene stimulated by NFYA. May play a role in retinal development where it regulates the composition of bipolar cell populations, by promoting differentiation of bipolar OFF-type cells. In the brain, may promote maintenance and suppress differentiation of neural progenitor cells in the developing cortex. This chain is Zinc fingers and homeoboxes protein 2 (ZHX2), found in Pongo abelii (Sumatran orangutan).